The sequence spans 224 residues: Non-structural protein 3 (224 aa).

One can recognise a CoV 3a-like viroporin TM domain in the interval 34–124 (NVVPIRQASN…RYKNALFIIF (91 aa)). The next 3 helical transmembrane spans lie at 40–60 (QASN…FALF), 69–88 (YIML…LLYY), and 95–111 (ATII…LVCF). One can recognise a CoV 3a-like viroporin CD domain in the interval 128-203 (TLSFLNGKAA…KLYVFSQHQI (76 aa)).

The protein localises to the host membrane. The protein is Non-structural protein 3 of Sus scrofa (Pig).